A 213-amino-acid polypeptide reads, in one-letter code: Thymidylate kinase (213 aa).

10-17 (GLEGAGKT) contributes to the ATP binding site.

This sequence belongs to the thymidylate kinase family.

The enzyme catalyses dTMP + ATP = dTDP + ADP. In terms of biological role, phosphorylation of dTMP to form dTDP in both de novo and salvage pathways of dTTP synthesis. In Klebsiella pneumoniae subsp. pneumoniae (strain ATCC 700721 / MGH 78578), this protein is Thymidylate kinase.